Reading from the N-terminus, the 255-residue chain is 3-dehydroquinate dehydratase (255 aa).

3-dehydroquinate is bound by residues Glu47–Arg49 and Arg83. The active-site Proton donor/acceptor is His144. Lys171 acts as the Schiff-base intermediate with substrate in catalysis. 3-dehydroquinate-binding residues include Arg214, Ser233, and Gln237.

Belongs to the type-I 3-dehydroquinase family. As to quaternary structure, homodimer.

The catalysed reaction is 3-dehydroquinate = 3-dehydroshikimate + H2O. It participates in metabolic intermediate biosynthesis; chorismate biosynthesis; chorismate from D-erythrose 4-phosphate and phosphoenolpyruvate: step 3/7. In terms of biological role, involved in the third step of the chorismate pathway, which leads to the biosynthesis of aromatic amino acids. Catalyzes the cis-dehydration of 3-dehydroquinate (DHQ) and introduces the first double bond of the aromatic ring to yield 3-dehydroshikimate. The chain is 3-dehydroquinate dehydratase from Alkaliphilus oremlandii (strain OhILAs) (Clostridium oremlandii (strain OhILAs)).